We begin with the raw amino-acid sequence, 349 residues long: Transmembrane protein 255A (349 aa).

The next 4 helical transmembrane spans lie at I30–A50, V57–I77, L89–V109, and T226–F246. Residues V301–A329 form a disordered region. The segment covering S316–A329 has biased composition (low complexity).

This sequence belongs to the TMEM255 family.

It localises to the membrane. In Macaca fascicularis (Crab-eating macaque), this protein is Transmembrane protein 255A (TMEM255A).